The following is a 174-amino-acid chain: MQTQKGGRPTILPKMYEEPLFSQIIDKIESGCNDREIYTSLHCSAKTFRKWRDDNIKAYDEAKSIARGNLLELAESALASKLTVRTLKETETIYDADGNVEKVKVKEKELDKDSLVAMMVAKAGNPELYNPTEWRRLQQEESSAHDLKAKIEELDDYKLSKYKTPEIEVPEGFE.

Belongs to the skunalikevirus terminase small subunit family.

Functionally, probable terminase small subunit. The terminase lies at a unique vertex of the procapsid and is composed of two subunits, a small terminase subunit and a large terminase subunit. Both terminase subunits heterooligomerize and are docked on the portal protein to form the packaging machine. Once the capsid is packaged with the DNA, the terminase complex is substituted by the connector proteins gp15. The polypeptide is Terminase small subunit (Lactococcus phage p2 (Lactococcus lactis bacteriophage p2)).